A 248-amino-acid polypeptide reads, in one-letter code: MLSIKDLHVSVEDKAILRGLSLDVHPGEVHAIMGPNGSGKSTLSATLAGREDYEVTGGTVEFKGKDLLALSPEDRAGEGIFMAFQYPVEIPGVSNQFFLQTALNAVRSYRGQETLDRFDFQDLMEEKIALLKMPEDLLTRSVNVGFSGGEKKRNDILQMAVLEPELCILDESDSGLDIDALKVVADGVNSLRDGKRSFIIVTHYQRILDYIKPDYVHVLYQGRIVKSGDFTLVKQLEEQGYGWLTEQQ.

In terms of domain architecture, ABC transporter spans leucine 2–glutamate 246. Glycine 34 to serine 41 is an ATP binding site.

It belongs to the ABC transporter superfamily. Ycf16 family. In terms of assembly, part of the SufBCD complex that contains SufB, SufC and SufD. Interacts directly with SufB and SufD. Interacts with SufA.

It is found in the cytoplasm. Its function is as follows. Has low ATPase activity. The SufBCD complex acts synergistically with SufE to stimulate the cysteine desulfurase activity of SufS. The SufBCD complex contributes to the assembly or repair of oxygen-labile iron-sulfur clusters under oxidative stress. May facilitate iron uptake from extracellular iron chelators under iron limitation. The chain is Probable ATP-dependent transporter SufC (sufC) from Escherichia coli (strain K12).